Reading from the N-terminus, the 264-residue chain is uncharacterized protein (264 aa).

The stretch at 19 to 45 (AQEESMEQLKDINTKIDNSEKKISLEN) forms a coiled coil.

This is an uncharacterized protein from Acanthamoeba polyphaga mimivirus (APMV).